The following is a 271-amino-acid chain: Calcium-binding protein 4 (271 aa).

Residues 1-105 are disordered; it reads MATEHNVQLV…RSDPQQDAAQ (105 aa). At Ser37 the chain carries Phosphoserine; by PKC/PRKCZ. Over residues 45 to 67 the composition is skewed to low complexity; sequence GSQKASSGDQSSSQGSEASGSSK. Residues 87 to 96 show a composition bias toward basic residues; it reads ASHRHSHRHR. 4 consecutive EF-hand domains span residues 125–160, 179–196, 202–237, and 239–271; these read EELE…LGYM, GFVD…KLRE, LGVR…LLGE, and LEGT…LSTG. The Ca(2+) site is built by Asp138, Asp140, Asp142, Tyr144, and Glu149. Asp215, Asp217, Asp219, Arg221, Glu226, Asp252, Asn254, Asp256, Thr258, and Glu263 together coordinate Ca(2+).

Interacts with CACNA1F and CACNA1D (via IQ domain) in a calcium independent manner. Interacts (via N-terminus) with UNC119. Post-translationally, phosphorylated. Phosphorylation levels change with the light conditions and regulate the activity, but has no effect on calcium binding. In terms of tissue distribution, expressed in retina and in the inner hair cells (IHC) of the cochlea.

It localises to the cytoplasm. It is found in the presynapse. Functionally, involved in normal synaptic function through regulation of Ca(2+) influx and neurotransmitter release in photoreceptor synaptic terminals and in auditory transmission. Modulator of CACNA1D and CACNA1F, suppressing the calcium-dependent inactivation and shifting the activation range to more hyperpolarized voltages. The polypeptide is Calcium-binding protein 4 (Cabp4) (Mus musculus (Mouse)).